The chain runs to 296 residues: Homoserine kinase (296 aa).

85 to 95 (PVARGLGSSAA) contributes to the ATP binding site.

The protein belongs to the GHMP kinase family. Homoserine kinase subfamily.

It is found in the cytoplasm. It catalyses the reaction L-homoserine + ATP = O-phospho-L-homoserine + ADP + H(+). It functions in the pathway amino-acid biosynthesis; L-threonine biosynthesis; L-threonine from L-aspartate: step 4/5. Functionally, catalyzes the ATP-dependent phosphorylation of L-homoserine to L-homoserine phosphate. This chain is Homoserine kinase, found in Moorella thermoacetica (strain ATCC 39073 / JCM 9320).